A 133-amino-acid chain; its full sequence is Profilin-4 (133 aa).

Cys13 and Cys117 are disulfide-bonded. The short motif at 83–99 is the Involved in PIP2 interaction element; it reads AVIRGKKGSGGITIKKT. Position 113 is a phosphothreonine (Thr113).

This sequence belongs to the profilin family. Occurs in many kinds of cells as a complex with monomeric actin in a 1:1 ratio. Post-translationally, phosphorylated by MAP kinases.

The protein resides in the cytoplasm. Its subcellular location is the cytoskeleton. In terms of biological role, binds to actin and affects the structure of the cytoskeleton. At high concentrations, profilin prevents the polymerization of actin, whereas it enhances it at low concentrations. In Corylus avellana (European hazel), this protein is Profilin-4.